The sequence spans 527 residues: Estrogen receptor beta (527 aa).

The modulating stretch occupies residues 1-145 (MDVKNSPSSL…SPSSKRDAHF (145 aa)). Phosphoserine; by MAPK is present on residues Ser84 and Ser102. 2 consecutive NR C4-type zinc fingers follow at residues 146-166 (CAVC…CEGC) and 182-206 (CPAT…LRKC). Residues 146–211 (CAVCSDYASG…RLRKCYEVGM (66 aa)) constitute a DNA-binding region (nuclear receptor). The 235-residue stretch at 261 to 495 (SPEQLVLTLL…DLLLEMLNAH (235 aa)) folds into the NR LBD domain.

Belongs to the nuclear hormone receptor family. NR3 subfamily. As to quaternary structure, binds DNA as a homodimer. Can form a heterodimer with ESR1. Interacts with NCOA1, NCOA3, NCOA5 and NCOA6 coactivators, leading to a strong increase of transcription of target genes. Interacts with UBE1C and AKAP13. Interacts with DNTTIP2. Interacts with CCDC62 in the presence of estradiol/E2; this interaction seems to enhance the transcription of target genes. Interacts with DNAAF4. Interacts with PRMT2. Interacts with CCAR2 (via N-terminus) in a ligand-independent manner. Interacts with RBM39, in the presence of estradiol (E2). Interacts with STUB1/CHIP. Post-translationally, phosphorylation at Ser-84 and Ser-102 recruits NCOA1. As to expression, present in granulosa cells of antral follicles in various stages of follicular growth.

It is found in the nucleus. Nuclear hormone receptor. Binds estrogens with an affinity similar to that of ESR1ESR1/ER-alpha, and activates expression of reporter genes containing estrogen response elements (ERE) in an estrogen-dependent manner. The protein is Estrogen receptor beta (ESR2) of Bos taurus (Bovine).